The following is a 677-amino-acid chain: Mitochondrial disaggregase (677 aa).

Residues 1–57 constitute a mitochondrion transit peptide; sequence MMLSAVLRRTAPAPRLFLGLIKSPSLQSRGGAYNRSVITGDRGEPQRLRTAAWVRPG. Positions 64–103 are disordered; the sequence is PGRGAATGGRRGERTEIPYLTAASSGRGPSPEETLPGQDS. An autoinhibitory region spans residues 92–126; sequence PSPEETLPGQDSWNGVPNKAGLGMWALAMALVVQC. ANK repeat units follow at residues 133-162, 166-195, 235-265, and 268-297; these read NKDAALMEAARANNVQEVRRLLSEGADVNA, LGWTALMVAAISHNESVVQVLLAAGADPNL, KGCTALHYAVLADDYSIVKELLGGGANPLQR, and MGHTPLDYAREGEVMKLLKTSETKYMEKQR. The ATP site is built by His316, Ile318, Ser353, Gly354, Ile355, Gly356, Lys357, Thr358, Glu425, and Asn466. Residues 477–505 form a regulatory; slows ATPase and disaggregase activities region; it reads LQLRQEALEMSRNRIAENLGDVQISDKIT. Position 531 (Arg531) interacts with ATP. N6-acetyllysine is present on Lys559. Arg590 is an ATP binding site.

The protein belongs to the ClpA/ClpB family. In terms of assembly, homododecamer when substrate-bound; the homododecamer consists of 2 homohexamers stacked head-to-head via ANK repeat-mediated interactions. The active substrate-bound form is likely to exist in a dynamic equilibrium between homohexamers and homododecamers. Homotetradecamer in the unbound state which is remodeled upon substrate binding into the homododecamer. Interacts with PHB and PHB2. Interacts with MAVS; the interaction is enhanced by Sendai virus infection. In terms of processing, proteolytically cleaved by protease PARL. ATP-dependent protein disaggregase activity is stimulated by PARL-mediated cleavage of the N-terminal autoinhibitory peptide.

The protein localises to the mitochondrion intermembrane space. The catalysed reaction is ATP + H2O = ADP + phosphate + H(+). Disaggregase activity is inhibited by ADP. Functions as a regulatory ATPase and participates in secretion/protein trafficking process. Has ATP-dependent protein disaggregase activity and is required to maintain the solubility of key mitochondrial proteins. Involved in mitochondrial-mediated antiviral innate immunity, activates RIG-I-mediated signal transduction and production of IFNB1 and pro-inflammatory cytokine IL6. Plays a role in granulocyte differentiation. In Rattus norvegicus (Rat), this protein is Mitochondrial disaggregase.